We begin with the raw amino-acid sequence, 141 residues long: Nucleoside diphosphate kinase (141 aa).

6 residues coordinate ATP: K11, F59, R87, T93, R104, and N114. H117 acts as the Pros-phosphohistidine intermediate in catalysis.

This sequence belongs to the NDK family. As to quaternary structure, homotetramer. Requires Mg(2+) as cofactor.

It localises to the cytoplasm. The enzyme catalyses a 2'-deoxyribonucleoside 5'-diphosphate + ATP = a 2'-deoxyribonucleoside 5'-triphosphate + ADP. It carries out the reaction a ribonucleoside 5'-diphosphate + ATP = a ribonucleoside 5'-triphosphate + ADP. Its function is as follows. Major role in the synthesis of nucleoside triphosphates other than ATP. The ATP gamma phosphate is transferred to the NDP beta phosphate via a ping-pong mechanism, using a phosphorylated active-site intermediate. The protein is Nucleoside diphosphate kinase of Pseudomonas fluorescens (strain Pf0-1).